Reading from the N-terminus, the 435-residue chain is Pregnancy-specific beta-1-glycoprotein 6 (435 aa).

The signal sequence occupies residues 1–34 (MGPLSAPPCTQHITWKGLLLTASLLNFWNLPTTA). The 109-residue stretch at 35 to 143 (QVIIEAKPPK…TGYFTVTLYS (109 aa)) folds into the Ig-like V-type domain. 3 N-linked (GlcNAc...) asparagine glycosylation sites follow: asparagine 61, asparagine 103, and asparagine 110. Positions 126–128 (RGD) match the Cell attachment site motif. 3 consecutive Ig-like C2-type domains span residues 148–233 (PSIS…VTLN), 241–326 (PYIT…VTLN), and 334–405 (PRIY…KEIS). 3 disulfide bridges follow: cysteine 168–cysteine 216, cysteine 261–cysteine 309, and cysteine 353–cysteine 393. N-linked (GlcNAc...) asparagine glycans are attached at residues asparagine 198, asparagine 267, asparagine 302, and asparagine 386.

The protein belongs to the immunoglobulin superfamily. CEA family.

It is found in the secreted. The polypeptide is Pregnancy-specific beta-1-glycoprotein 6 (PSG6) (Homo sapiens (Human)).